Reading from the N-terminus, the 351-residue chain is Protein RecA (351 aa).

64–71 (GPESSGKT) contacts ATP. A disordered region spans residues 330-351 (DRFLQNGGPDPDDGDGDATAEM). The span at 339 to 351 (DPDDGDGDATAEM) shows a compositional bias: acidic residues.

Belongs to the RecA family.

It is found in the cytoplasm. Its function is as follows. Can catalyze the hydrolysis of ATP in the presence of single-stranded DNA, the ATP-dependent uptake of single-stranded DNA by duplex DNA, and the ATP-dependent hybridization of homologous single-stranded DNAs. It interacts with LexA causing its activation and leading to its autocatalytic cleavage. This is Protein RecA from Rhizobium leguminosarum bv. viciae.